The sequence spans 346 residues: Putative D-threonate 4-phosphate dehydrogenase (346 aa).

Histidine 141 and threonine 142 together coordinate substrate. A divalent metal cation is bound by residues histidine 171, histidine 215, and histidine 270. 2 residues coordinate substrate: lysine 278 and arginine 296.

Belongs to the PdxA family. PdxA2 subfamily. Homodimer. It depends on a divalent metal cation as a cofactor.

It catalyses the reaction 4-O-phospho-D-threonate + NAD(+) = dihydroxyacetone phosphate + CO2 + NADH. Functionally, catalyzes the NAD-dependent oxidation and subsequent decarboxylation of D-threonate 4-phosphate to produce dihydroxyacetone phosphate (DHAP). This is Putative D-threonate 4-phosphate dehydrogenase from Cutibacterium acnes (strain DSM 16379 / KPA171202) (Propionibacterium acnes).